The sequence spans 432 residues: Short transient receptor potential channel 2 homolog (432 aa).

4 consecutive transmembrane segments (helical) span residues 1–21 (MVILSLYLAAFTLRLLLAGLA), 52–72 (FLAEVLFAVTSMLSFTRLASI), 96–116 (FMFILMIILTAFLCGLNNIYV), and 162–182 (LYGIFTIVMVIVLLNMLIAMI). The disordered stretch occupies residues 356-432 (QNLGPPIPET…EADLGAKEGT (77 aa)). Over residues 387–404 (AGGAQAPASGESGPSSPA) the composition is skewed to low complexity.

The protein belongs to the transient receptor (TC 1.A.4) family. STrpC subfamily. TRPC2 sub-subfamily.

The protein localises to the membrane. Its function is as follows. Thought to form a receptor-activated calcium permeant cation channel. The sequence is that of Short transient receptor potential channel 2 homolog (TRPC2) from Bos taurus (Bovine).